The following is a 55-amino-acid chain: Protein CADMIUM TOLERANCE 2 (55 aa).

Residues 24–40 (GCLYACIFTALCCFCCY) traverse the membrane as a helical segment.

Belongs to the CYSTM1 family. As to expression, expressed only in roots.

The protein resides in the cell membrane. It is found in the secreted. The protein localises to the cell wall. Its function is as follows. Confers resistance to heavy metal ions (e.g. cadmium (CdCl(2)) and copper (CuCl(2))) by chelating them at the plasma membrane of root cells, thus stopping their entry and reducing their accumulation. This Oryza sativa subsp. japonica (Rice) protein is Protein CADMIUM TOLERANCE 2.